The sequence spans 638 residues: ATP-dependent zinc metalloprotease FtsH (638 aa).

Topologically, residues 1–4 (MNNQ) are cytoplasmic. A helical membrane pass occupies residues 5–25 (GKNIIVWAVIFVFVILLFNVF). The Periplasmic portion of the chain corresponds to 26–103 (QSDGLLSSKN…VVPPETRMNT (78 aa)). Residues 104-124 (FLSFLISWFPMLLLIGVWVFF) form a helical membrane-spanning segment. The Cytoplasmic portion of the chain corresponds to 125 to 638 (MRQMHGGGKA…PIKAKKEDKS (514 aa)). 195–202 (GPPGTGKT) provides a ligand contact to ATP. Histidine 417 lines the Zn(2+) pocket. The active site involves glutamate 418. Zn(2+)-binding residues include histidine 421 and aspartate 495. Positions 523 to 544 (SASEDMYTNRNSSSDRSESTSE) are disordered.

In the central section; belongs to the AAA ATPase family. The protein in the C-terminal section; belongs to the peptidase M41 family. As to quaternary structure, homohexamer. Requires Zn(2+) as cofactor.

The protein resides in the cell inner membrane. Functionally, acts as a processive, ATP-dependent zinc metallopeptidase for both cytoplasmic and membrane proteins. Plays a role in the quality control of integral membrane proteins. In Rickettsia bellii (strain RML369-C), this protein is ATP-dependent zinc metalloprotease FtsH.